Reading from the N-terminus, the 425-residue chain is Serine--tRNA ligase (425 aa).

Position 233–235 (233–235 (TAE)) interacts with L-serine. 264-266 (RRE) contributes to the ATP binding site. Glutamate 287 provides a ligand contact to L-serine. 351–354 (EISS) contacts ATP. Serine 385 contributes to the L-serine binding site.

Belongs to the class-II aminoacyl-tRNA synthetase family. Type-1 seryl-tRNA synthetase subfamily. In terms of assembly, homodimer. The tRNA molecule binds across the dimer.

Its subcellular location is the cytoplasm. The enzyme catalyses tRNA(Ser) + L-serine + ATP = L-seryl-tRNA(Ser) + AMP + diphosphate + H(+). The catalysed reaction is tRNA(Sec) + L-serine + ATP = L-seryl-tRNA(Sec) + AMP + diphosphate + H(+). It participates in aminoacyl-tRNA biosynthesis; selenocysteinyl-tRNA(Sec) biosynthesis; L-seryl-tRNA(Sec) from L-serine and tRNA(Sec): step 1/1. In terms of biological role, catalyzes the attachment of serine to tRNA(Ser). Is also able to aminoacylate tRNA(Sec) with serine, to form the misacylated tRNA L-seryl-tRNA(Sec), which will be further converted into selenocysteinyl-tRNA(Sec). This Prochlorococcus marinus (strain SARG / CCMP1375 / SS120) protein is Serine--tRNA ligase.